Here is a 2778-residue protein sequence, read N- to C-terminus: Probable ubiquitin carboxyl-terminal hydrolase FAF (2778 aa).

The tract at residues 1 to 85 (MTFDTRRHTT…SQSSDDVAAS (85 aa)) is disordered. The span at 10–39 (TGQPGSTAPSSSSSTTSTTTTTTSPAQSAG) shows a compositional bias: low complexity. The span at 71 to 85 (QPATDSQSSDDVAAS) shows a compositional bias: polar residues. At Ser924 the chain carries Phosphoserine. The segment at 1065-1094 (GTGLASSPDSSSDSSTGSPPRPCPDMQRVE) is disordered. Residues 1070 to 1082 (SSPDSSSDSSTGS) show a composition bias toward low complexity. The USP domain maps to 1668–2062 (CGLKNAGATC…NAYMLFYTRC (395 aa)). Cys1677 functions as the Nucleophile in the catalytic mechanism. His1986 functions as the Proton acceptor in the catalytic mechanism. Disordered stretches follow at residues 2568 to 2632 (VSEK…GDSN) and 2644 to 2691 (AYTS…INGL). 2 stretches are compositionally biased toward low complexity: residues 2614–2627 (TPTT…AWPA) and 2644–2671 (AYTS…GSGA). The segment covering 2672–2691 (NSETESSAQETTGETTINGL) has biased composition (polar residues).

The protein belongs to the peptidase C19 family. In terms of assembly, interacts with imd. In terms of processing, ubiquitinated. Ubiquitination is enhanced by the expression of imd. Eye disks and ovaries. Expressed in larval fat body.

It catalyses the reaction Thiol-dependent hydrolysis of ester, thioester, amide, peptide and isopeptide bonds formed by the C-terminal Gly of ubiquitin (a 76-residue protein attached to proteins as an intracellular targeting signal).. In terms of biological role, ubiquitin C-terminal hydrolase involved in development and the imd/NF-kappa-B (IMD) signaling cascade. Required for eye and embryo development, and plays a role in compound eye assembly and oogenesis respectively. In the larval eye disks, cells outside the assembling facets require this protein for short-range cell interactions that prevent the mystery cells from becoming photoreceptors. Also required for nuclear migration and cellularization in early embryogenesis and could play a role in pole cell determination, development or function. Regulates the IMD signaling cascade at later stages of infection (around 6 hours post-infection) by inhibiting the expression of the antimicrobial peptides Dpt and Dro. Acts by modulating the state of imd polyubiquitination and/or stability; a function which appears to be independent of its enzymatic activity. In turn, imd enhances the polyubiquitination and stability of faf suggesting that they may form a regulatory feedback mechanism within the Imd pathway. The chain is Probable ubiquitin carboxyl-terminal hydrolase FAF (faf) from Drosophila melanogaster (Fruit fly).